Reading from the N-terminus, the 78-residue chain is U-scoloptoxin(04)-Er1e (78 aa).

Positions 1 to 24 (MTRHLIFAAMLLVCLFVCWNAVGA) are cleaved as a signal peptide. A propeptide spanning residues 25–28 (RDAR) is cleaved from the precursor.

This sequence belongs to the scoloptoxin-04 family. Contains 2 disulfide bonds. As to expression, expressed by the venom gland.

The protein localises to the secreted. The polypeptide is U-scoloptoxin(04)-Er1e (Ethmostigmus rubripes (Giant centipede)).